The sequence spans 243 residues: Thiocyanate hydrolase subunit gamma (243 aa).

C128, C131, S132, and C133 together coordinate Co(3+). C131 carries the post-translational modification Cysteine sulfinic acid (-SO2H). At C133 the chain carries Cysteine sulfenic acid (-SOH).

Belongs to the nitrile hydratase subunit alpha family. In terms of assembly, heterododecamer consisting of 4 alpha, 4 beta, and 4 gamma subunits. Co(3+) serves as cofactor.

It catalyses the reaction thiocyanate + H2O + 2 H(+) = carbonyl sulfide + NH4(+). The protein operates within organosulfur degradation; thiocyanate degradation. Functionally, involved in the degradation of thiocyanate. The chain is Thiocyanate hydrolase subunit gamma (scnC) from Thiobacillus thioparus.